Here is a 321-residue protein sequence, read N- to C-terminus: Probable arabinan endo-1,5-alpha-L-arabinosidase C (321 aa).

The N-terminal stretch at 1-20 (MYLYTLILLFLASVNVNAYA) is a signal peptide. D33 functions as the Proton acceptor in the catalytic mechanism. 2 N-linked (GlcNAc...) asparagine glycosylation sites follow: N75 and N192. E200 (proton donor) is an active-site residue. An N-linked (GlcNAc...) asparagine glycan is attached at N224.

This sequence belongs to the glycosyl hydrolase 43 family.

It localises to the secreted. The enzyme catalyses Endohydrolysis of (1-&gt;5)-alpha-arabinofuranosidic linkages in (1-&gt;5)-arabinans.. It functions in the pathway glycan metabolism; L-arabinan degradation. In terms of biological role, endo-1,5-alpha-L-arabinanase involved in degradation of pectin. Its preferred substrate is linear 1,5-alpha-L-arabinan. The sequence is that of Probable arabinan endo-1,5-alpha-L-arabinosidase C (abnC) from Neosartorya fischeri (strain ATCC 1020 / DSM 3700 / CBS 544.65 / FGSC A1164 / JCM 1740 / NRRL 181 / WB 181) (Aspergillus fischerianus).